The sequence spans 200 residues: Probable molybdenum cofactor guanylyltransferase (200 aa).

Residues 9–11, Lys-21, Asp-69, and Asp-100 contribute to the GTP site; that span reads LAG. Asp-100 is a Mg(2+) binding site.

It belongs to the MobA family. It depends on Mg(2+) as a cofactor.

Its subcellular location is the cytoplasm. It catalyses the reaction Mo-molybdopterin + GTP + H(+) = Mo-molybdopterin guanine dinucleotide + diphosphate. Functionally, transfers a GMP moiety from GTP to Mo-molybdopterin (Mo-MPT) cofactor (Moco or molybdenum cofactor) to form Mo-molybdopterin guanine dinucleotide (Mo-MGD) cofactor. This is Probable molybdenum cofactor guanylyltransferase from Bacillus cereus (strain AH187).